The chain runs to 353 residues: Probable butyrate kinase (353 aa).

It belongs to the acetokinase family.

Its subcellular location is the cytoplasm. It carries out the reaction butanoate + ATP = butanoyl phosphate + ADP. This Bacteroides thetaiotaomicron (strain ATCC 29148 / DSM 2079 / JCM 5827 / CCUG 10774 / NCTC 10582 / VPI-5482 / E50) protein is Probable butyrate kinase.